Here is a 495-residue protein sequence, read N- to C-terminus: Divinyl ether synthase CYP74M3 (495 aa).

Residue cysteine 446 coordinates heme.

This sequence belongs to the cytochrome P450 family. Heme serves as cofactor.

It carries out the reaction (13S)-hydroperoxy-(9Z,11E)-octadecadienoate = etheroleate + H2O. It catalyses the reaction (13S)-hydroperoxy-(9Z,11E,15Z)-octadecatrienoate = etherolenate + H2O. Its pathway is lipid metabolism; oxylipin biosynthesis. In terms of biological role, divinyl ether synthase involved in oxylipin biosynthesis. Catalyzes the conversion of (13S)-hydroperoxy-(9Z,11E)-octadecadienoate (13-HPOD) to etheroleate and (13S)-hydroperoxy-(9Z,11E,15Z)-octadecatrienoate (13-HPOT) to etherolenate. Has no activity with the corresponding 9-hydroperoxides (9-HPOD and 9-HPOT). This Selaginella moellendorffii (Spikemoss) protein is Divinyl ether synthase CYP74M3.